Reading from the N-terminus, the 315-residue chain is DNA-directed RNA polymerase subunit alpha (315 aa).

The alpha N-terminal domain (alpha-NTD) stretch occupies residues 1–228 (MLEIEKPKIE…EHLRLFIGLT (228 aa)). The tract at residues 246-315 (DKILEMTIEE…LGLSLRQEDE (70 aa)) is alpha C-terminal domain (alpha-CTD).

The protein belongs to the RNA polymerase alpha chain family. In terms of assembly, homodimer. The RNAP catalytic core consists of 2 alpha, 1 beta, 1 beta' and 1 omega subunit. When a sigma factor is associated with the core the holoenzyme is formed, which can initiate transcription.

The catalysed reaction is RNA(n) + a ribonucleoside 5'-triphosphate = RNA(n+1) + diphosphate. DNA-dependent RNA polymerase catalyzes the transcription of DNA into RNA using the four ribonucleoside triphosphates as substrates. The polypeptide is DNA-directed RNA polymerase subunit alpha (Desulforamulus reducens (strain ATCC BAA-1160 / DSM 100696 / MI-1) (Desulfotomaculum reducens)).